The primary structure comprises 296 residues: Maltose/maltodextrin transport system permease protein MalG (296 aa).

Over 1–12 the chain is Cytoplasmic; it reads MAMVQGKSLKYR. Residues 13–35 traverse the membrane as a helical segment; that stretch reads VWATHIALWAFLSMIIFPLLMIV. Topologically, residues 36 to 88 are periplasmic; that stretch reads AISFREGNFATGSLIPDNPSLEHWKLALGFSVTNADGSVTPPPFPVLTWLWNS. Residues 85–281 enclose the ABC transmembrane type-1 domain; that stretch reads LWNSVKVAGI…LPITIVFLLA (197 aa). The helical transmembrane segment at 89 to 111 threads the bilayer; that stretch reads VKVAGITSILIVALSTTSAYAFA. The Cytoplasmic segment spans residues 112 to 123; that stretch reads RLRFKGKETILK. A helical membrane pass occupies residues 124-143; that stretch reads AMMIFQMFPAVLALVALYAL. At 144–152 the chain is on the periplasmic side; it reads FDKLGQYIP. A helical transmembrane segment spans residues 153-175; it reads FLGLNTHGGLIFSYLGGIALHVW. Over 176 to 204 the chain is Cytoplasmic; sequence TIKGYFETIDNSLEEAAALDGATPWQAFR. The helical transmembrane segment at 205–227 threads the bilayer; it reads LVLLPLSVPILAVVFILSFIGVV. Residues 228–257 are Periplasmic-facing; that stretch reads GEVPVASLLLSDVNSYTLAVGMQQYLYPQN. A helical membrane pass occupies residues 258–280; that stretch reads YLWGDFAAAAVLSALPITIVFLL. The Cytoplasmic portion of the chain corresponds to 281-296; that stretch reads AQRWLVGGLTAGGVKG.

It belongs to the binding-protein-dependent transport system permease family. MalFG subfamily. The complex is composed of two ATP-binding proteins (MalK), two transmembrane proteins (MalG and MalF) and a solute-binding protein (MalE).

The protein resides in the cell inner membrane. Its function is as follows. Part of the ABC transporter complex MalEFGK involved in maltose/maltodextrin import. Probably responsible for the translocation of the substrate across the membrane. This Vibrio vulnificus (strain CMCP6) protein is Maltose/maltodextrin transport system permease protein MalG (malG).